A 758-amino-acid polypeptide reads, in one-letter code: 5-methyltetrahydropteroyltriglutamate--homocysteine methyltransferase (758 aa).

Residues 17 to 20 (RELK) and Lys-117 contribute to the 5-methyltetrahydropteroyltri-L-glutamate site. L-homocysteine-binding positions include 434 to 436 (IGS) and Glu-487. Residues 434–436 (IGS) and Glu-487 each bind L-methionine. Residues 518 to 519 (RC) and Trp-564 each bind 5-methyltetrahydropteroyltri-L-glutamate. Asp-602 provides a ligand contact to L-homocysteine. Residue Asp-602 coordinates L-methionine. Residue Glu-608 coordinates 5-methyltetrahydropteroyltri-L-glutamate. Zn(2+) is bound by residues His-644, Cys-646, and Glu-668. His-697 serves as the catalytic Proton donor. Residue Cys-729 participates in Zn(2+) binding.

This sequence belongs to the vitamin-B12 independent methionine synthase family. Requires Zn(2+) as cofactor.

It carries out the reaction 5-methyltetrahydropteroyltri-L-glutamate + L-homocysteine = tetrahydropteroyltri-L-glutamate + L-methionine. Its pathway is amino-acid biosynthesis; L-methionine biosynthesis via de novo pathway; L-methionine from L-homocysteine (MetE route): step 1/1. Functionally, catalyzes the transfer of a methyl group from 5-methyltetrahydrofolate to homocysteine resulting in methionine formation. This Yersinia pestis bv. Antiqua (strain Antiqua) protein is 5-methyltetrahydropteroyltriglutamate--homocysteine methyltransferase.